The primary structure comprises 70 residues: Venom antimicrobial peptide-6 (70 aa).

The N-terminal stretch at 1–23 (MKSQTFFLLFLVVFLLAITQSEA) is a signal peptide. Position 36 is a phenylalanine amide (F36). A propeptide spanning residues 40 to 70 (SLRDMDTMKYLYDPSLSAADLKTLQKLMENY) is cleaved from the precursor.

Belongs to the non-disulfide-bridged peptide (NDBP) superfamily. Short antimicrobial peptide (group 4) family. As to expression, expressed by the venom gland.

The protein localises to the secreted. It localises to the target cell membrane. Amphipathic peptide that exhibits extensive cytolytic activities against both prokaryotic and eukaryotic cells. Is more potent against Gram-positive bacteria (lethal concentration (LC)=0.25-2.9 uM) than against Gram-negative bacteria (LC=6.2-&gt;50 uM), and fungi ((LC)=14.1-&gt;50 uM). Shows hemolytic activity against rabbit erythrocytes (37.7% of inhibition at 6.25 uM) and cytolysis against rat dorsal root ganglions. In vivo, intravenous injection into mice tail provokes uncomfortable symptoms with a death rate of 12.5%. The polypeptide is Venom antimicrobial peptide-6 (Mesobuthus eupeus (Lesser Asian scorpion)).